The chain runs to 297 residues: Ectoine dioxygenase (297 aa).

Gln131 lines the L-ectoine pocket. Lys137 contributes to the 2-oxoglutarate binding site. Positions 148, 150, and 249 each coordinate Fe cation.

The protein belongs to the PhyH family. EctD subfamily. In terms of assembly, homodimer. Requires Fe(2+) as cofactor.

The enzyme catalyses L-ectoine + 2-oxoglutarate + O2 = 5-hydroxyectoine + succinate + CO2. In terms of biological role, involved in the biosynthesis of 5-hydroxyectoine, called compatible solute, which helps organisms to survive extreme osmotic stress by acting as a highly soluble organic osmolyte. Catalyzes the 2-oxoglutarate-dependent selective hydroxylation of L-ectoine to yield (4S,5S)-5-hydroxyectoine. The sequence is that of Ectoine dioxygenase from Streptomyces anulatus (Streptomyces chrysomallus).